The following is a 174-amino-acid chain: NADH-ubiquinone oxidoreductase chain 6 (174 aa).

6 helical membrane-spanning segments follow: residues 1 to 21 (MTYA…GFSS), 24 to 44 (SPIY…AVIL), 47 to 67 (GGGY…MVVF), 86 to 106 (AEVL…VLWV), 111 to 131 (GVVV…EGEG), and 151 to 171 (WLVV…IEIA).

Belongs to the complex I subunit 6 family. Core subunit of respiratory chain NADH dehydrogenase (Complex I) which is composed of 45 different subunits.

It localises to the mitochondrion inner membrane. It catalyses the reaction a ubiquinone + NADH + 5 H(+)(in) = a ubiquinol + NAD(+) + 4 H(+)(out). In terms of biological role, core subunit of the mitochondrial membrane respiratory chain NADH dehydrogenase (Complex I) which catalyzes electron transfer from NADH through the respiratory chain, using ubiquinone as an electron acceptor. Essential for the catalytic activity and assembly of complex I. This Pongo pygmaeus (Bornean orangutan) protein is NADH-ubiquinone oxidoreductase chain 6 (MT-ND6).